Reading from the N-terminus, the 341-residue chain is uncharacterized protein (341 aa).

The next 4 membrane-spanning stretches (helical) occupy residues 8–28, 63–83, 171–191, and 317–337; these read LMLTFNEPLYLFLLVIFPLII, LMYFFTYSFLYLAAMVMVFAL, IYIMDLGNGSALGLGISIALS, and EFLVLAFCLLLVYFIFSKIFL. In terms of domain architecture, VWFA spans 101–305; that stretch reads DIVIVLDISP…SKKENLERKI (205 aa).

It localises to the cell membrane. This is an uncharacterized protein from Borreliella burgdorferi (strain ATCC 35210 / DSM 4680 / CIP 102532 / B31) (Borrelia burgdorferi).